A 353-amino-acid chain; its full sequence is Methylthioribose-1-phosphate isomerase (353 aa).

Substrate is bound by residues 48–50 (RGA), Arg-94, and Gln-201. Asp-242 serves as the catalytic Proton donor. 252-253 (NK) serves as a coordination point for substrate.

This sequence belongs to the eIF-2B alpha/beta/delta subunits family. MtnA subfamily.

It catalyses the reaction 5-(methylsulfanyl)-alpha-D-ribose 1-phosphate = 5-(methylsulfanyl)-D-ribulose 1-phosphate. It functions in the pathway amino-acid biosynthesis; L-methionine biosynthesis via salvage pathway; L-methionine from S-methyl-5-thio-alpha-D-ribose 1-phosphate: step 1/6. Catalyzes the interconversion of methylthioribose-1-phosphate (MTR-1-P) into methylthioribulose-1-phosphate (MTRu-1-P). The chain is Methylthioribose-1-phosphate isomerase from Roseiflexus sp. (strain RS-1).